The following is a 496-amino-acid chain: Lysine--tRNA ligase (496 aa).

2 residues coordinate Mg(2+): E409 and E416.

Belongs to the class-II aminoacyl-tRNA synthetase family. As to quaternary structure, homodimer. Mg(2+) is required as a cofactor.

Its subcellular location is the cytoplasm. It carries out the reaction tRNA(Lys) + L-lysine + ATP = L-lysyl-tRNA(Lys) + AMP + diphosphate. In Streptococcus pneumoniae (strain Hungary19A-6), this protein is Lysine--tRNA ligase.